Here is a 758-residue protein sequence, read N- to C-terminus: Glucan endo-1,3-beta-D-glucosidase (758 aa).

The segment at residues 1-34 (MSHASRRRWRRATTSAATAALLCGALLTFPSAPA) is a signal peptide (tat-type signal). The segment at 38 to 251 (VRLGSGSYTT…SGYASVALLP (214 aa)) is beta-sandwich subdomain. Positions 38 to 704 (VRLGSGSYTT…QWLSTLAEFG (667 aa)) constitute a GH81 domain. Residues 252–342 (SPDDFDRYAP…EGDRFTTELT (91 aa)) form an alpha/beta subdomain region. Positions 352–704 (TVDSADHQRL…QWLSTLAEFG (353 aa)) are (alpha/beta)6 barrel subdomain. Tyrosine 382, lysine 386, aspartate 457, histidine 461, asparagine 532, glutamate 534, and glutamate 538 together coordinate (1,3-beta-D-glucosyl)n. Aspartate 457 is an active-site residue. Catalysis depends on residues glutamate 534 and glutamate 538.

The protein belongs to the glycosyl hydrolase 81 family. Post-translationally, predicted to be exported by the Tat system. The position of the signal peptide cleavage has not been experimentally proven.

Its subcellular location is the secreted. It carries out the reaction Hydrolysis of (1-&gt;3)-beta-D-glucosidic linkages in (1-&gt;3)-beta-D-glucans.. Cleaves internal linkages in 1,3-beta-glucan. May contribute to biomass degradation by hydrolyzing the 1,3-beta-linked plant polymer callose that is present in decomposing plant tissue. This chain is Glucan endo-1,3-beta-D-glucosidase, found in Thermobifida fusca (strain YX).